The primary structure comprises 484 residues: Glutamate--tRNA ligase (484 aa).

Residues 11–21 carry the 'HIGH' region motif; it reads PSPTGYLHIGN. Positions 252–256 match the 'KMSKS' region motif; that stretch reads KLSKR. ATP is bound at residue Lys255.

This sequence belongs to the class-I aminoacyl-tRNA synthetase family. Glutamate--tRNA ligase type 1 subfamily. In terms of assembly, monomer.

Its subcellular location is the cytoplasm. The catalysed reaction is tRNA(Glu) + L-glutamate + ATP = L-glutamyl-tRNA(Glu) + AMP + diphosphate. Catalyzes the attachment of glutamate to tRNA(Glu) in a two-step reaction: glutamate is first activated by ATP to form Glu-AMP and then transferred to the acceptor end of tRNA(Glu). In Staphylococcus saprophyticus subsp. saprophyticus (strain ATCC 15305 / DSM 20229 / NCIMB 8711 / NCTC 7292 / S-41), this protein is Glutamate--tRNA ligase.